The chain runs to 296 residues: Porphobilinogen deaminase (296 aa).

S-(dipyrrolylmethanemethyl)cysteine is present on Cys-232.

Belongs to the HMBS family. Monomer. The cofactor is dipyrromethane.

It carries out the reaction 4 porphobilinogen + H2O = hydroxymethylbilane + 4 NH4(+). It participates in porphyrin-containing compound metabolism; protoporphyrin-IX biosynthesis; coproporphyrinogen-III from 5-aminolevulinate: step 2/4. In terms of biological role, tetrapolymerization of the monopyrrole PBG into the hydroxymethylbilane pre-uroporphyrinogen in several discrete steps. In Corynebacterium aurimucosum (strain ATCC 700975 / DSM 44827 / CIP 107346 / CN-1) (Corynebacterium nigricans), this protein is Porphobilinogen deaminase.